The following is a 336-amino-acid chain: Ketol-acid reductoisomerase (NADP(+)) 1 (336 aa).

Residues 2 to 181 (AKVYYEKDVT…GATRAGVLET (180 aa)) enclose the KARI N-terminal Rossmann domain. NADP(+) contacts are provided by residues 25–28 (YGSQ), arginine 48, serine 52, and 82–85 (DELQ). The active site involves histidine 107. Position 133 (glycine 133) interacts with NADP(+). The region spanning 182-327 (TFKEETETDL…RKLREMMPFV (146 aa)) is the KARI C-terminal knotted domain. 4 residues coordinate Mg(2+): aspartate 190, glutamate 194, glutamate 226, and glutamate 230. Serine 251 serves as a coordination point for substrate.

Belongs to the ketol-acid reductoisomerase family. It depends on Mg(2+) as a cofactor.

It catalyses the reaction (2R)-2,3-dihydroxy-3-methylbutanoate + NADP(+) = (2S)-2-acetolactate + NADPH + H(+). It carries out the reaction (2R,3R)-2,3-dihydroxy-3-methylpentanoate + NADP(+) = (S)-2-ethyl-2-hydroxy-3-oxobutanoate + NADPH + H(+). The protein operates within amino-acid biosynthesis; L-isoleucine biosynthesis; L-isoleucine from 2-oxobutanoate: step 2/4. Its pathway is amino-acid biosynthesis; L-valine biosynthesis; L-valine from pyruvate: step 2/4. In terms of biological role, involved in the biosynthesis of branched-chain amino acids (BCAA). Catalyzes an alkyl-migration followed by a ketol-acid reduction of (S)-2-acetolactate (S2AL) to yield (R)-2,3-dihydroxy-isovalerate. In the isomerase reaction, S2AL is rearranged via a Mg-dependent methyl migration to produce 3-hydroxy-3-methyl-2-ketobutyrate (HMKB). In the reductase reaction, this 2-ketoacid undergoes a metal-dependent reduction by NADPH to yield (R)-2,3-dihydroxy-isovalerate. The polypeptide is Ketol-acid reductoisomerase (NADP(+)) 1 (Bacillus cereus (strain ZK / E33L)).